A 137-amino-acid chain; its full sequence is Fluoride-specific ion channel FluC 1 (137 aa).

Transmembrane regions (helical) follow at residues 3-23 (PLVV…RLVL), 42-62 (INVT…GHGL), 69-89 (ILGT…YEAV), and 107-127 (MMFL…LAVA). The Na(+) site is built by G76 and T79.

This sequence belongs to the fluoride channel Fluc/FEX (TC 1.A.43) family.

Its subcellular location is the cell membrane. The catalysed reaction is fluoride(in) = fluoride(out). Na(+) is not transported, but it plays an essential structural role and its presence is essential for fluoride channel function. Its function is as follows. Fluoride-specific ion channel. Important for reducing fluoride concentration in the cell, thus reducing its toxicity. The polypeptide is Fluoride-specific ion channel FluC 1 (Leifsonia xyli subsp. xyli (strain CTCB07)).